The sequence spans 132 residues: Small ribosomal subunit protein uS8 (132 aa).

It belongs to the universal ribosomal protein uS8 family. Part of the 30S ribosomal subunit. Contacts proteins S5 and S12.

Functionally, one of the primary rRNA binding proteins, it binds directly to 16S rRNA central domain where it helps coordinate assembly of the platform of the 30S subunit. The chain is Small ribosomal subunit protein uS8 from Syntrophomonas wolfei subsp. wolfei (strain DSM 2245B / Goettingen).